The sequence spans 241 residues: Methylthioribulose-1-phosphate dehydratase (241 aa).

Cys96 is a substrate binding site. The Zn(2+) site is built by His114 and His116. Residue Glu138 is the Proton donor/acceptor of the active site. His194 contributes to the Zn(2+) binding site.

The protein belongs to the aldolase class II family. MtnB subfamily. It depends on Zn(2+) as a cofactor.

It localises to the cytoplasm. It catalyses the reaction 5-(methylsulfanyl)-D-ribulose 1-phosphate = 5-methylsulfanyl-2,3-dioxopentyl phosphate + H2O. It functions in the pathway amino-acid biosynthesis; L-methionine biosynthesis via salvage pathway; L-methionine from S-methyl-5-thio-alpha-D-ribose 1-phosphate: step 2/6. In terms of biological role, catalyzes the dehydration of methylthioribulose-1-phosphate (MTRu-1-P) into 2,3-diketo-5-methylthiopentyl-1-phosphate (DK-MTP-1-P). Functions in the methionine salvage pathway. May play a role in apoptosis. The polypeptide is Methylthioribulose-1-phosphate dehydratase (Danio rerio (Zebrafish)).